The sequence spans 878 residues: Lon protease 2 (878 aa).

In terms of domain architecture, Lon N-terminal spans 85–281; the sequence is LYLLPVKERP…KVLSLFKHEI (197 aa). 434–441 contacts ATP; it reads GPPGVGKT. The 183-residue stretch at 668–850 folds into the Lon proteolytic domain; it reads NQQMGTVTGL…DDVAKLTFHI (183 aa). Active-site residues include Ser-756 and Lys-799.

Belongs to the peptidase S16 family. Homohexamer. Organized in a ring with a central cavity.

Its subcellular location is the cytoplasm. It carries out the reaction Hydrolysis of proteins in presence of ATP.. Its function is as follows. ATP-dependent serine protease that mediates the selective degradation of mutant and abnormal proteins as well as certain short-lived regulatory proteins. Required for cellular homeostasis and for survival from DNA damage and developmental changes induced by stress. Degrades polypeptides processively to yield small peptide fragments that are 5 to 10 amino acids long. Binds to DNA in a double-stranded, site-specific manner. The protein is Lon protease 2 of Hydrogenovibrio crunogenus (strain DSM 25203 / XCL-2) (Thiomicrospira crunogena).